A 394-amino-acid chain; its full sequence is Arogenate dehydratase 2 (394 aa).

Residues 1-24 are disordered; sequence MAATTTLRSPKIPHPPPESTPSNL. The transit peptide at 1–47 directs the protein to the chloroplast; sequence MAATTTLRSPKIPHPPPESTPSNLSYLSQISLTPVPKRRRFISIYAC. The Prephenate dehydratase domain occupies 108–283; the sequence is RVAYQGVRGA…NVTRFLMLAR (176 aa). The region spanning 297–388 is the ACT domain; sequence SVVFSLDEGP…TFLRVLGSYP (92 aa).

In terms of tissue distribution, expressed at low levels in petals (corollas and tubes), stems, leaves, pistils, stamens, ovaries and sepals.

Its subcellular location is the plastid. The protein resides in the chloroplast stroma. The catalysed reaction is prephenate + H(+) = 3-phenylpyruvate + CO2 + H2O. It catalyses the reaction L-arogenate + H(+) = L-phenylalanine + CO2 + H2O. Its pathway is amino-acid biosynthesis; L-phenylalanine biosynthesis; L-phenylalanine from L-arogenate: step 1/1. Its function is as follows. Converts the prephenate and L-arogenate produced from the shikimate-chorismate pathway into 3-phenylpyruvate and phenylalanine (Phe), respectively. Involved in floral volatile benzenoids and phenylpropanoids (FVBP) production. This is Arogenate dehydratase 2 from Petunia hybrida (Petunia).